Consider the following 104-residue polypeptide: Cytochrome c-551 (104 aa).

Residues 1–22 (MKPYALLSLLATGTLLAQGAWA) form the signal peptide. Heme c contacts are provided by C34, C37, H38, and M83.

Post-translationally, binds 1 heme c group covalently per subunit.

Its subcellular location is the periplasm. Its function is as follows. Electron donor for cytochrome cd1 in nitrite and nitrate respiration. This chain is Cytochrome c-551 (nirM), found in Pseudomonas aeruginosa (strain ATCC 15692 / DSM 22644 / CIP 104116 / JCM 14847 / LMG 12228 / 1C / PRS 101 / PAO1).